A 320-amino-acid polypeptide reads, in one-letter code: Acetyl-coenzyme A carboxylase carboxyl transferase subunit alpha (320 aa).

The region spanning 39-293 (ALDAKAAKLL…RGAIAAMLKE (255 aa)) is the CoA carboxyltransferase C-terminal domain.

Belongs to the AccA family. In terms of assembly, acetyl-CoA carboxylase is a heterohexamer composed of biotin carboxyl carrier protein (AccB), biotin carboxylase (AccC) and two subunits each of ACCase subunit alpha (AccA) and ACCase subunit beta (AccD).

It localises to the cytoplasm. It catalyses the reaction N(6)-carboxybiotinyl-L-lysyl-[protein] + acetyl-CoA = N(6)-biotinyl-L-lysyl-[protein] + malonyl-CoA. Its pathway is lipid metabolism; malonyl-CoA biosynthesis; malonyl-CoA from acetyl-CoA: step 1/1. Functionally, component of the acetyl coenzyme A carboxylase (ACC) complex. First, biotin carboxylase catalyzes the carboxylation of biotin on its carrier protein (BCCP) and then the CO(2) group is transferred by the carboxyltransferase to acetyl-CoA to form malonyl-CoA. The sequence is that of Acetyl-coenzyme A carboxylase carboxyl transferase subunit alpha from Ruegeria pomeroyi (strain ATCC 700808 / DSM 15171 / DSS-3) (Silicibacter pomeroyi).